The following is a 360-amino-acid chain: Type 2 DNA topoisomerase 6 subunit A (360 aa).

In terms of domain architecture, Topo IIA-type catalytic spans 3–140 (EIERRCLRAL…FHIRPEEDGA (138 aa)). Y97 acts as the O-(5'-phospho-DNA)-tyrosine intermediate in catalysis. Residues E193 and D245 each contribute to the Mg(2+) site.

The protein belongs to the TOP6A family. In terms of assembly, homodimer. Heterotetramer of two Top6A and two Top6B chains. Requires Mg(2+) as cofactor.

The catalysed reaction is ATP-dependent breakage, passage and rejoining of double-stranded DNA.. Functionally, relaxes both positive and negative superturns and exhibits a strong decatenase activity. This Archaeoglobus fulgidus (strain ATCC 49558 / DSM 4304 / JCM 9628 / NBRC 100126 / VC-16) protein is Type 2 DNA topoisomerase 6 subunit A.